Here is a 184-residue protein sequence, read N- to C-terminus: NADH-quinone oxidoreductase subunit B (184 aa).

[4Fe-4S] cluster contacts are provided by Cys-63, Cys-64, Cys-128, and Cys-158.

The protein belongs to the complex I 20 kDa subunit family. In terms of assembly, NDH-1 is composed of 14 different subunits. Subunits NuoB, C, D, E, F, and G constitute the peripheral sector of the complex. It depends on [4Fe-4S] cluster as a cofactor.

It is found in the cell inner membrane. The enzyme catalyses a quinone + NADH + 5 H(+)(in) = a quinol + NAD(+) + 4 H(+)(out). In terms of biological role, NDH-1 shuttles electrons from NADH, via FMN and iron-sulfur (Fe-S) centers, to quinones in the respiratory chain. Couples the redox reaction to proton translocation (for every two electrons transferred, four hydrogen ions are translocated across the cytoplasmic membrane), and thus conserves the redox energy in a proton gradient. In Stenotrophomonas maltophilia (strain R551-3), this protein is NADH-quinone oxidoreductase subunit B.